Reading from the N-terminus, the 210-residue chain is Small ribosomal subunit protein uS7 (210 aa).

The span at 1 to 22 (MSDEQPAEDETEEAAAESEDTQ) shows a compositional bias: acidic residues. The tract at residues 1 to 23 (MSDEQPAEDETEEAAAESEDTQE) is disordered.

This sequence belongs to the universal ribosomal protein uS7 family. In terms of assembly, part of the 30S ribosomal subunit. Contacts proteins S9 and S11.

Its function is as follows. One of the primary rRNA binding proteins, it binds directly to 16S rRNA where it nucleates assembly of the head domain of the 30S subunit. Is located at the subunit interface close to the decoding center. This Halobacterium salinarum (strain ATCC 29341 / DSM 671 / R1) protein is Small ribosomal subunit protein uS7.